Reading from the N-terminus, the 235-residue chain is Glycerol-3-phosphate acyltransferase (235 aa).

Helical transmembrane passes span 4-24 (LLAI…IMAG), 56-76 (SVTL…VAFF), 94-114 (LLAG…GFKG), 125-145 (LIGI…LTVW), 152-172 (VASI…KYVF), and 191-211 (FHDS…LAIL).

The protein belongs to the PlsY family. As to quaternary structure, probably interacts with PlsX.

It is found in the cell inner membrane. The catalysed reaction is an acyl phosphate + sn-glycerol 3-phosphate = a 1-acyl-sn-glycero-3-phosphate + phosphate. The protein operates within lipid metabolism; phospholipid metabolism. Its function is as follows. Catalyzes the transfer of an acyl group from acyl-phosphate (acyl-PO(4)) to glycerol-3-phosphate (G3P) to form lysophosphatidic acid (LPA). This enzyme utilizes acyl-phosphate as fatty acyl donor, but not acyl-CoA or acyl-ACP. This chain is Glycerol-3-phosphate acyltransferase, found in Chlorobium luteolum (strain DSM 273 / BCRC 81028 / 2530) (Pelodictyon luteolum).